We begin with the raw amino-acid sequence, 122 residues long: Small ribosomal subunit protein uS13 (122 aa).

A disordered region spans residues 95–122 (GLPVRGQRTRTNARTRKGPRKTVAKKKK).

The protein belongs to the universal ribosomal protein uS13 family. In terms of assembly, part of the 30S ribosomal subunit. Forms a loose heterodimer with protein S19. Forms two bridges to the 50S subunit in the 70S ribosome.

Its function is as follows. Located at the top of the head of the 30S subunit, it contacts several helices of the 16S rRNA. In the 70S ribosome it contacts the 23S rRNA (bridge B1a) and protein L5 of the 50S subunit (bridge B1b), connecting the 2 subunits; these bridges are implicated in subunit movement. Contacts the tRNAs in the A and P-sites. In Thermoanaerobacter pseudethanolicus (strain ATCC 33223 / 39E) (Clostridium thermohydrosulfuricum), this protein is Small ribosomal subunit protein uS13.